We begin with the raw amino-acid sequence, 130 residues long: Large ribosomal subunit protein bL20 (130 aa).

It belongs to the bacterial ribosomal protein bL20 family.

Its function is as follows. Binds directly to 23S ribosomal RNA and is necessary for the in vitro assembly process of the 50S ribosomal subunit. It is not involved in the protein synthesizing functions of that subunit. The chain is Large ribosomal subunit protein bL20 from Clavibacter sepedonicus (Clavibacter michiganensis subsp. sepedonicus).